Here is a 264-residue protein sequence, read N- to C-terminus: Low molecular mass lipoprotein PBMHP-12 (264 aa).

Positions 1-16 are cleaved as a signal peptide; that stretch reads MKLLVVFAMCVPAASA.

It belongs to the 30 kDa lipoprotein family.

Its subcellular location is the secreted. The polypeptide is Low molecular mass lipoprotein PBMHP-12 (Bombyx mori (Silk moth)).